Here is a 557-residue protein sequence, read N- to C-terminus: TWiK family of potassium channels protein 7 (557 aa).

Disordered stretches follow at residues 1-34 and 128-151; these read MTSSSRGYQRVDSSGDGGSLLMEEEGDNPHEALL and DKSGHEDIDDESDDESKDEDEEEE. The Cytoplasmic segment spans residues 1-165; that stretch reads MTSSSRGYQR…RKFAKLVLPH (165 aa). Residues 134–151 show a composition bias toward acidic residues; that stretch reads DIDDESDDESKDEDEEEE. A helical membrane pass occupies residues 166-186; it reads VALVLLTCTYTVIGALIFYSV. N-linked (GlcNAc...) asparagine glycans are attached at residues asparagine 220 and asparagine 237. Residues 270–290 constitute an intramembrane region (pore-forming); the sequence is SIFFAVTVVTTIGYGNPVPVT. Residues 295–315 form a helical membrane-spanning segment; that stretch reads IWCILFSLLGIPLTLVTIADL. The Cytoplasmic segment spans residues 316–368; that stretch reads GKFLSEHLVWLYGNYLKLKYLILSRHRKERREHVCEHCHSHGMGHDMNIEEKR. Residues 369–389 traverse the membrane as a helical segment; the sequence is IPAFLVLAILIVYTAFGGVLM. The segment at residues 397-417 is an intramembrane region (pore-forming); sequence FFTSFYWSFITMTTVGFGDLM. The chain crosses the membrane as a helical span at residues 426 to 446; it reads IILLYIILGLAITTMCIDLVG. Over 447–557 the chain is Cytoplasmic; the sequence is VQYIRKIHYF…SRYSLNRAFK (111 aa).

The protein belongs to the two pore domain potassium channel (TC 1.A.1.8) family.

The protein resides in the membrane. This Caenorhabditis elegans protein is TWiK family of potassium channels protein 7 (twk-7).